Reading from the N-terminus, the 535-residue chain is Sodium/hydrogen exchanger 1 (535 aa).

At M1–S21 the chain is on the cytoplasmic side. Residues V22–L42 traverse the membrane as a helical segment. Over E43 to R46 the chain is Vacuolar. The helical transmembrane segment at W47–L67 threads the bilayer. Over M68–H75 the chain is Cytoplasmic. The chain crosses the membrane as a helical span at residues L76–A96. Over G97–L114 the chain is Vacuolar. A helical membrane pass occupies residues F115 to F135. Over S136–R137 the chain is Cytoplasmic. The chain crosses the membrane as a helical span at residues M138 to T158. Residues D159–P173 are Vacuolar-facing. A helical transmembrane segment spans residues F174–F194. Over N195–F218 the chain is Cytoplasmic. Residues Y219–I239 traverse the membrane as a helical segment. Residues K240 to Y264 are Vacuolar-facing. The chain crosses the membrane as a helical span at residues M265–M285. The Cytoplasmic segment spans residues S286–A304. The helical transmembrane segment at F305 to L325 threads the bilayer. Residues D326 to S344 lie on the Vacuolar side of the membrane. The chain crosses the membrane as a helical span at residues S345–L365. Residues S366–Q381 are Cytoplasmic-facing. The helical transmembrane segment at Q382–N402 threads the bilayer. Residues K403 to N415 lie on the Vacuolar side of the membrane. Residues A416–M436 traverse the membrane as a helical segment. Topologically, residues T437–R535 are cytoplasmic. The disordered stretch occupies residues V452 to T478. A compositionally biased stretch (low complexity) spans S454–S469.

The protein belongs to the monovalent cation:proton antiporter 1 (CPA1) transporter (TC 2.A.36) family.

It localises to the vacuole membrane. The enzyme catalyses Na(+)(in) + H(+)(out) = Na(+)(out) + H(+)(in). It catalyses the reaction K(+)(in) + H(+)(out) = K(+)(out) + H(+)(in). Its function is as follows. Vacuolar antiporter that acts in low affinity electroneutral exchange of protons H(+) for cations such as Na(+) or K(+) across membranes. Plays important roles in the transport of Na(+) and K(+) accumulated in the cytoplasm into vacuoles, and is involved in salt stress tolerance. This chain is Sodium/hydrogen exchanger 1, found in Oryza sativa subsp. japonica (Rice).